The sequence spans 145 residues: D-aminoacyl-tRNA deacylase (145 aa).

The short motif at 137-138 is the Gly-cisPro motif, important for rejection of L-amino acids element; sequence GP.

The protein belongs to the DTD family. As to quaternary structure, homodimer.

The protein localises to the cytoplasm. The catalysed reaction is glycyl-tRNA(Ala) + H2O = tRNA(Ala) + glycine + H(+). The enzyme catalyses a D-aminoacyl-tRNA + H2O = a tRNA + a D-alpha-amino acid + H(+). In terms of biological role, an aminoacyl-tRNA editing enzyme that deacylates mischarged D-aminoacyl-tRNAs. Also deacylates mischarged glycyl-tRNA(Ala), protecting cells against glycine mischarging by AlaRS. Acts via tRNA-based rather than protein-based catalysis; rejects L-amino acids rather than detecting D-amino acids in the active site. By recycling D-aminoacyl-tRNA to D-amino acids and free tRNA molecules, this enzyme counteracts the toxicity associated with the formation of D-aminoacyl-tRNA entities in vivo and helps enforce protein L-homochirality. This is D-aminoacyl-tRNA deacylase from Azotobacter vinelandii (strain DJ / ATCC BAA-1303).